The primary structure comprises 644 residues: MVAITLPDGSVKNFEGNTTVMEVAQSIGTGLAKATVAGRVDGHLVDAHDPIVADAKVEIVTPRDDDGVDIIRHSCAHLLGHAVKQLYPDVKMVIGPVIDDGFYYDIYSETPFTPEHMAAIEKRMMELIKQDYDVIKKITPRAEVIKIFEERGEDYKLKLINDMPGEEAFGLYHHQEYVDMCRGPHVPNTRFLKVFKLTKMSGAYWRGDAKNEQLQRIYGTAWADKKDLKTYIQRIEEAEKRDHRKIGKALNLFHMQEQAPGMVFWHANGWTIYQVLEQYMRKVQQDNGYEEIKTPQIVDRSLWERSGHWGNYATNMFTTSSEKRDYAVKPMNCPCHVQVFNQGLKSYRDLPLRMAEFGSCHRNEPSGSLHGLMRVRGFTQDDAHIFCTQSQIQQEVADFIKLTLAVYEDFGFNNIIMKLSTRPEKRVGSDESWDFAEKALADALDNSGLDWAYLPGEGAFYGPKIEFSLKDSLGRVWQCGTIQVDPNMPERLDAEFVNEQNEREVPIMLHRAILGSFERFIGILIENYAGWMPVWLAPQQVVVMNITDKQAEACENVVNELKKSGLRAISDLRNEKIGFKIREKTLERIPYMLVLGDKEVESGSVNVRTREGENLGVMSVAEFIILVETAVAEKGRQTPKIDQE.

The TGS domain maps to 1–61 (MVAITLPDGS…VADAKVEIVT (61 aa)). Residues 242 to 533 (DHRKIGKALN…LIENYAGWMP (292 aa)) form a catalytic region. Residues Cys-333, His-384, and His-510 each contribute to the Zn(2+) site.

This sequence belongs to the class-II aminoacyl-tRNA synthetase family. As to quaternary structure, homodimer. It depends on Zn(2+) as a cofactor.

Its subcellular location is the cytoplasm. The enzyme catalyses tRNA(Thr) + L-threonine + ATP = L-threonyl-tRNA(Thr) + AMP + diphosphate + H(+). Catalyzes the attachment of threonine to tRNA(Thr) in a two-step reaction: L-threonine is first activated by ATP to form Thr-AMP and then transferred to the acceptor end of tRNA(Thr). Also edits incorrectly charged L-seryl-tRNA(Thr). This Psychrobacter arcticus (strain DSM 17307 / VKM B-2377 / 273-4) protein is Threonine--tRNA ligase.